We begin with the raw amino-acid sequence, 129 residues long: MAPKNNAKGGDKKGKGKDASEGDKGKGGGKGLKPATSINVRHILCEKFSKKEEALEKLRNGAKFDDVAREYSEDKARQGGSLGWKVRGSLNADFEKAAYELEPSTTANPKYVEVKTGFGYHIIMVEGRK.

The interval 1-34 (MAPKNNAKGGDKKGKGKDASEGDKGKGGGKGLKP) is disordered. Residues 9 to 26 (GGDKKGKGKDASEGDKGK) are compositionally biased toward basic and acidic residues. The region spanning 35–127 (ATSINVRHIL…FGYHIIMVEG (93 aa)) is the PpiC domain.

The protein belongs to the PpiC/parvulin rotamase family. PIN4 subfamily.

It carries out the reaction [protein]-peptidylproline (omega=180) = [protein]-peptidylproline (omega=0). PPIases accelerate the folding of proteins. It catalyzes the cis-trans isomerization of proline imidic peptide bonds in oligopeptides. The polypeptide is Peptidyl-prolyl cis-trans isomerase pin4 (pin4) (Aspergillus fumigatus (strain ATCC MYA-4609 / CBS 101355 / FGSC A1100 / Af293) (Neosartorya fumigata)).